The primary structure comprises 552 residues: Cycloheximide resistance protein (552 aa).

Residues 46–70 (VLNSSDKSQSSENKEQTEGDQATIQ) are disordered. Positions 47-56 (LNSSDKSQSS) are enriched in polar residues. A run of 12 helical transmembrane segments spans residues 100-120 (AIAA…SAIY), 137-157 (LATL…LFWS), 168-188 (TPLY…TALS), 194-213 (LSVL…STGG), 225-246 (YSIA…GPLI), 262-282 (WSFW…SFSL), 346-362 (IYIA…FESV), 381-399 (YVST…LPTV), 419-439 (LPPA…FGWT), 445-464 (NWFV…FIIF), 477-494 (VEYL…RSVS), and 518-539 (WGSS…FFYL).

Belongs to the major facilitator superfamily. CAR1 family.

The protein resides in the membrane. Functionally, probable transporter. Confers resistance to cycloheximide. The protein is Cycloheximide resistance protein (CYHR) of Candida maltosa (Yeast).